The primary structure comprises 201 residues: Large ribosomal subunit protein uL4 (201 aa).

The tract at residues 44–73 is disordered; sequence RAQKSRAEVKASRKKPWRQKGTGRARAGSV. A compositionally biased stretch (basic residues) spans 55-66; the sequence is SRKKPWRQKGTG.

Belongs to the universal ribosomal protein uL4 family. In terms of assembly, part of the 50S ribosomal subunit.

One of the primary rRNA binding proteins, this protein initially binds near the 5'-end of the 23S rRNA. It is important during the early stages of 50S assembly. It makes multiple contacts with different domains of the 23S rRNA in the assembled 50S subunit and ribosome. In terms of biological role, forms part of the polypeptide exit tunnel. In Hamiltonella defensa subsp. Acyrthosiphon pisum (strain 5AT), this protein is Large ribosomal subunit protein uL4.